The primary structure comprises 501 residues: MTSPDSPDDIPEQFRIRQAKRERLLAEGREPYPVKVDRTHTLAELRQAYPDLEPDTKTGLKVGVAGRVIFARNSGKLCFATLQEGDGAQLQVMISFAEVGQESLDAWKADVDLGDIVFVHGEVISSRRGELSVLADSWQIVSKALRPLPVAHKELNEETRVRQRYVDLIVRPEARTIARQRIAVVRAVRSALERRGFLEVETPMLQTLAGGAAARPFVTHSNALDADLYLRIAPELFLKRCVVGGFDRVFELNRNFRNEGADSTHSPEFAMLETYQAYGTYDDSATVTRELIQEVADEAIGTRQVPLADGTEYDLDGEWQSLQMYPSLSEALGEEITPATPAEKLWQIADRLGVEIPRDRGYGHGKLVEELWEFTVGDTLWAPTFVRDFPVETTPLTRPHRSIEGVTEKWDLYVRKFELATGYSELIDPIIQRERFEAQARAAAAGDDEAMALDEDFLAALEYGMPPTTGTGMGIDRLLMALTGLSIRETVLFPIVRRHSN.

The Mg(2+) site is built by Asp411 and Glu418.

Belongs to the class-II aminoacyl-tRNA synthetase family. In terms of assembly, homodimer. Mg(2+) serves as cofactor.

It localises to the cytoplasm. It carries out the reaction tRNA(Lys) + L-lysine + ATP = L-lysyl-tRNA(Lys) + AMP + diphosphate. In Mycolicibacterium gilvum (strain PYR-GCK) (Mycobacterium gilvum (strain PYR-GCK)), this protein is Lysine--tRNA ligase.